Consider the following 99-residue polypeptide: Integration host factor subunit alpha (99 aa).

It belongs to the bacterial histone-like protein family. Heterodimer of an alpha and a beta chain.

In terms of biological role, this protein is one of the two subunits of integration host factor, a specific DNA-binding protein that functions in genetic recombination as well as in transcriptional and translational control. This is Integration host factor subunit alpha (ihfA) from Xanthomonas axonopodis pv. citri (strain 306).